The primary structure comprises 108 residues: Envelope small membrane protein (108 aa).

Over 1–10 (MNLLNKSLEE) the chain is Virion surface. A helical transmembrane segment spans residues 11 to 31 (NGSFLTALYIIVGFLALYLLG). Topologically, residues 32–108 (RALQAFVQAA…QDAQRDKLYS (77 aa)) are intravirion. The disordered stretch occupies residues 88–108 (NGWNNKNPANFQDAQRDKLYS). The segment covering 89 to 100 (GWNNKNPANFQD) has biased composition (polar residues).

This sequence belongs to the gammacoronaviruses E protein family. In terms of assembly, homooligomer. Interacts with the M membrane protein in the budding compartment of the host cell, which is located between endoplasmic reticulum and the Golgi complex. The cytoplasmic tails of both proteins are important for this function. Interacts with Nucleoprotein.

Its subcellular location is the host Golgi apparatus membrane. Its function is as follows. Plays a central role in virus morphogenesis and assembly. Acts as a viroporin and self-assembles in host membranes forming pentameric protein-lipid pores that allow ion transport. Also plays a role in the induction of apoptosis. In Gallus gallus (Chicken), this protein is Envelope small membrane protein.